The sequence spans 278 residues: 4-diphosphocytidyl-2-C-methyl-D-erythritol kinase (278 aa).

The active site involves Lys9. Residue 93 to 103 coordinates ATP; sequence PLGGGLGGGSS. The active site involves Asp135.

It belongs to the GHMP kinase family. IspE subfamily.

The catalysed reaction is 4-CDP-2-C-methyl-D-erythritol + ATP = 4-CDP-2-C-methyl-D-erythritol 2-phosphate + ADP + H(+). It functions in the pathway isoprenoid biosynthesis; isopentenyl diphosphate biosynthesis via DXP pathway; isopentenyl diphosphate from 1-deoxy-D-xylulose 5-phosphate: step 3/6. In terms of biological role, catalyzes the phosphorylation of the position 2 hydroxy group of 4-diphosphocytidyl-2C-methyl-D-erythritol. This chain is 4-diphosphocytidyl-2-C-methyl-D-erythritol kinase, found in Nitrosomonas europaea (strain ATCC 19718 / CIP 103999 / KCTC 2705 / NBRC 14298).